Here is a 308-residue protein sequence, read N- to C-terminus: B- and T-lymphocyte attenuator (308 aa).

The first 29 residues, 1–29 (MKTVPAMLVTPRSFREFFILLLGLWSILC), serve as a signal peptide directing secretion. Topologically, residues 30-183 (KEPTKRIGEE…ERPGRTWLLY (154 aa)) are extracellular. The Ig-like V-type domain occupies 32 to 134 (PTKRIGEECR…SANLNSEVIN (103 aa)). Cystine bridges form between Cys40-Cys69, Cys64-Cys124, and Cys78-Cys85. N-linked (GlcNAc...) asparagine glycosylation is found at Asn49, Asn74, Asn81, Asn148, and Asn165. Residues 184 to 204 (ALLPLGTSLLLLACVCLLCFL) form a helical membrane-spanning segment. Over 205–308 (RRIQGKEKKP…TEYASICVRS (104 aa)) the chain is Cytoplasmic.

As to quaternary structure, interacts with tyrosine phosphatases PTPN6/SHP-1 and PTPN11/SHP-2. Interacts with TNFRSF14/HVEM (via cysteine-rich domain 1). Post-translationally, phosphorylated on Tyr residues by TNFRSF14 and by antigen receptors cross-linking, both inducing association with PTPN6 and PTPN11. N-glycosylated.

Its subcellular location is the cell membrane. Functionally, inhibitory receptor on lymphocytes that negatively regulates antigen receptor signaling via PTPN6/SHP-1 and PTPN11/SHP-2. May interact in cis (on the same cell) or in trans (on other cells) with TNFRSF14. In cis interactions, appears to play an immune regulatory role inhibiting in trans interactions in naive T cells to maintain a resting state. In trans interactions, can predominate during adaptive immune response to provide survival signals to effector T cells. This is B- and T-lymphocyte attenuator from Rattus norvegicus (Rat).